The sequence spans 690 residues: SWI/SNF-related matrix-associated actin-dependent regulator of chromatin subfamily A-like protein 1 homolog (690 aa).

Positions 30–49 are disordered; that stretch reads MQAAANATASTSSAAPPAPP. Low complexity predominate over residues 31–44; that stretch reads QAAANATASTSSAA. One can recognise an HARP domain in the interval 92–170; that stretch reads PTSLIKPTIG…AVKVELEPLP (79 aa). The Helicase ATP-binding domain maps to 209–367; the sequence is IFALERDGRI…FTQIRLIDHK (159 aa). Position 222–229 (222–229) interacts with ATP; sequence DEMGLGKS. A DESH box motif is present at residues 316–319; that stretch reads DESH. Residues 411–428 carry the Nuclear localization signal motif; it reads RRLKADVLKDLPEKRREV. The region spanning 482-639 is the Helicase C-terminal domain; the sequence is ILENYFYPDA…TFRTADKMHL (158 aa).

Belongs to the SNF2/RAD54 helicase family. SMARCAL1 subfamily.

It is found in the nucleus. It carries out the reaction ATP + H2O = ADP + phosphate + H(+). In terms of biological role, ATP-dependent annealing helicase that catalyzes the rewinding of the stably unwound DNA. The protein is SWI/SNF-related matrix-associated actin-dependent regulator of chromatin subfamily A-like protein 1 homolog of Caenorhabditis elegans.